Here is a 386-residue protein sequence, read N- to C-terminus: Succinate--CoA ligase [ADP-forming] subunit beta (386 aa).

The region spanning Lys9–Glu244 is the ATP-grasp domain. ATP-binding positions include Lys46, Gly53 to Gly55, Glu99, Cys102, and Glu107. Residues Asn199 and Asp213 each contribute to the Mg(2+) site. Residues Asn264 and Gly321–Met323 each bind substrate.

The protein belongs to the succinate/malate CoA ligase beta subunit family. As to quaternary structure, heterotetramer of two alpha and two beta subunits. Requires Mg(2+) as cofactor.

It carries out the reaction succinate + ATP + CoA = succinyl-CoA + ADP + phosphate. It catalyses the reaction GTP + succinate + CoA = succinyl-CoA + GDP + phosphate. It participates in carbohydrate metabolism; tricarboxylic acid cycle; succinate from succinyl-CoA (ligase route): step 1/1. In terms of biological role, succinyl-CoA synthetase functions in the citric acid cycle (TCA), coupling the hydrolysis of succinyl-CoA to the synthesis of either ATP or GTP and thus represents the only step of substrate-level phosphorylation in the TCA. The beta subunit provides nucleotide specificity of the enzyme and binds the substrate succinate, while the binding sites for coenzyme A and phosphate are found in the alpha subunit. The sequence is that of Succinate--CoA ligase [ADP-forming] subunit beta from Exiguobacterium sibiricum (strain DSM 17290 / CCUG 55495 / CIP 109462 / JCM 13490 / 255-15).